Consider the following 691-residue polypeptide: Pentatricopeptide repeat-containing protein ATP4, chloroplastic (691 aa).

Residues methionine 1 to tryptophan 17 show a composition bias toward low complexity. Residues methionine 1–valine 35 constitute a chloroplast transit peptide. The segment at methionine 1–asparagine 76 is disordered. Residues alanine 24–serine 33 show a composition bias toward polar residues. The segment covering proline 45–aspartate 56 has biased composition (pro residues). Residues glycine 61–asparagine 76 show a composition bias toward polar residues. 10 PPR repeats span residues lysine 163–proline 197, aspartate 198–proline 232, aspartate 233–leucine 267, aspartate 268–proline 302, asparagine 303–proline 337, serine 338–isoleucine 372, aspartate 373–serine 403, aspartate 411–proline 445, asparagine 446–proline 480, and lysine 546–alanine 580. Residues leucine 592–lysine 677 form the Smr domain.

The protein belongs to the PPR family. P subfamily.

The protein resides in the plastid. The protein localises to the chloroplast stroma. Its function is as follows. Involved in translation and accumulation of chloroplast ATP synthase subunits. Interacts with the 5'-UTR of the chloroplast bicistronic atpB and atpE mRNA and activates its translation by facilitating ribosome association with the mRNA. Required for accumulation and activity of the chloroplast ATP synthase. Enhances atpA translation and is required for accumulation of specific processed atpF and psaJ transcripts. Required for the stabilization of bicistronic rpl16 and rpl14 mRNAs. The chain is Pentatricopeptide repeat-containing protein ATP4, chloroplastic from Zea mays (Maize).